The chain runs to 208 residues: Small ribosomal subunit protein uS4 (208 aa).

The S4 RNA-binding domain maps to 98 to 161; it reads LRLDNVVFRL…RKVVRISEAL (64 aa).

Belongs to the universal ribosomal protein uS4 family. As to quaternary structure, part of the 30S ribosomal subunit. Contacts protein S5. The interaction surface between S4 and S5 is involved in control of translational fidelity.

Functionally, one of the primary rRNA binding proteins, it binds directly to 16S rRNA where it nucleates assembly of the body of the 30S subunit. In terms of biological role, with S5 and S12 plays an important role in translational accuracy. The sequence is that of Small ribosomal subunit protein uS4 from Anaeromyxobacter sp. (strain Fw109-5).